We begin with the raw amino-acid sequence, 184 residues long: Large ribosomal subunit protein uL22 (184 aa).

It belongs to the universal ribosomal protein uL22 family.

This Yarrowia lipolytica (strain CLIB 122 / E 150) (Yeast) protein is Large ribosomal subunit protein uL22 (RPL17).